The following is a 183-amino-acid chain: Peptide deformylase (183 aa).

Cys110 and His153 together coordinate Fe cation. Glu154 is a catalytic residue. His157 lines the Fe cation pocket.

It belongs to the polypeptide deformylase family. The cofactor is Fe(2+).

The enzyme catalyses N-terminal N-formyl-L-methionyl-[peptide] + H2O = N-terminal L-methionyl-[peptide] + formate. Functionally, removes the formyl group from the N-terminal Met of newly synthesized proteins. Requires at least a dipeptide for an efficient rate of reaction. N-terminal L-methionine is a prerequisite for activity but the enzyme has broad specificity at other positions. This chain is Peptide deformylase, found in Oceanobacillus iheyensis (strain DSM 14371 / CIP 107618 / JCM 11309 / KCTC 3954 / HTE831).